Here is a 205-residue protein sequence, read N- to C-terminus: Protein-L-isoaspartate O-methyltransferase (205 aa).

Serine 52 is a catalytic residue.

Belongs to the methyltransferase superfamily. L-isoaspartyl/D-aspartyl protein methyltransferase family.

The protein resides in the cytoplasm. The catalysed reaction is [protein]-L-isoaspartate + S-adenosyl-L-methionine = [protein]-L-isoaspartate alpha-methyl ester + S-adenosyl-L-homocysteine. Its function is as follows. Catalyzes the methyl esterification of L-isoaspartyl residues in peptides and proteins that result from spontaneous decomposition of normal L-aspartyl and L-asparaginyl residues. It plays a role in the repair and/or degradation of damaged proteins. The sequence is that of Protein-L-isoaspartate O-methyltransferase from Gloeobacter violaceus (strain ATCC 29082 / PCC 7421).